The primary structure comprises 211 residues: MADESGDAAGCPPPAPAPIRRQSSANYRAYATEPHAKKKSKISASRKLQLKTLMLQIAKQELEREAEERRGEKGRALSTRCQPLELAGLGFAELQDLCRQLHARVDKVDEERYDVEAKVTKNITEIADLTQKIFDLRGKFKRPTLRRVRISADAMMQALLGTRAKESLDLRAHLKQVKKEDTEKENREVGDWRKNIDALSGMEGRKKKFEG.

Positions 1–23 are disordered; it reads MADESGDAAGCPPPAPAPIRRQS. Alanine 2 is subject to N-acetylalanine. Serine 5 carries the phosphoserine modification. A phosphoserine; by PKA and PKD/PRKD1 mark is found at serine 23 and serine 24. Residue tyrosine 27 is modified to Phosphotyrosine. The residue at position 32 (threonine 32) is a Phosphothreonine; by STK4/MST1. The interval 33–80 is involved in binding TNC; it reads EPHAKKKSKISASRKLQLKTLMLQIAKQELEREAEERRGEKGRALSTR. A phosphoserine; by PKC/PRKCE mark is found at serine 43 and serine 45. Threonine 52 is subject to Phosphothreonine; by STK4/MST1. The residue at position 78 (serine 78) is a Phosphoserine. Residue threonine 79 is modified to Phosphothreonine. Residues threonine 130 and threonine 144 each carry the phosphothreonine; by STK4/MST1 modification. Positions 130 to 150 are involved in binding TNC and actin; sequence TQKIFDLRGKFKRPTLRRVRI. Serine 151 is modified (phosphoserine; by PAK3). Serine 167 bears the Phosphoserine mark. Threonine 182 carries the phosphothreonine modification. Serine 200 bears the Phosphoserine mark.

The protein belongs to the troponin I family. As to quaternary structure, binds to actin and tropomyosin. Interacts with TRIM63. Interacts with STK4/MST1. Post-translationally, phosphorylated at Ser-23 and Ser-24 by PRKD1; phosphorylation reduces myofilament calcium sensitivity. Phosphorylated preferentially at Thr-32. Phosphorylation by STK4/MST1 alters its binding affinity to TNNC1 (cardiac Tn-C) and TNNT2 (cardiac Tn-T). Phosphorylated at Ser-43 and Ser-45 by PRKCE; phosphorylation increases myocardium contractile dysfunction.

Troponin I is the inhibitory subunit of troponin, the thin filament regulatory complex which confers calcium-sensitivity to striated muscle actomyosin ATPase activity. This is Troponin I, cardiac muscle (TNNI3) from Canis lupus familiaris (Dog).